The chain runs to 425 residues: Adenylosuccinate synthetase (425 aa).

GTP is bound by residues 12-18 (GDEGKGK) and 40-42 (GHT). The active-site Proton acceptor is Asp-13. Mg(2+) contacts are provided by Asp-13 and Gly-40. Residues 13–16 (DEGK), 38–41 (NAGH), Thr-130, Arg-144, Gln-224, Thr-239, and Arg-301 each bind IMP. The Proton donor role is filled by His-41. Position 297–303 (297–303 (TVSNRRR)) interacts with substrate. Residues Arg-303, 329 to 331 (KLD), and 411 to 413 (STS) each bind GTP.

This sequence belongs to the adenylosuccinate synthetase family. Homodimer. Mg(2+) is required as a cofactor.

It localises to the cytoplasm. The catalysed reaction is IMP + L-aspartate + GTP = N(6)-(1,2-dicarboxyethyl)-AMP + GDP + phosphate + 2 H(+). It participates in purine metabolism; AMP biosynthesis via de novo pathway; AMP from IMP: step 1/2. Plays an important role in the de novo pathway of purine nucleotide biosynthesis. Catalyzes the first committed step in the biosynthesis of AMP from IMP. This is Adenylosuccinate synthetase from Wolbachia sp. subsp. Drosophila simulans (strain wRi).